Here is a 236-residue protein sequence, read N- to C-terminus: tRNA (guanine-N(7)-)-methyltransferase (236 aa).

A compositionally biased stretch (basic and acidic residues) spans Met1–Phe17. The disordered stretch occupies residues Met1–Gly23. Glu67, Glu92, Asp119, and Asp141 together coordinate S-adenosyl-L-methionine. Residue Asp141 is part of the active site. Positions 145 and 177 each coordinate substrate.

It belongs to the class I-like SAM-binding methyltransferase superfamily. TrmB family.

The catalysed reaction is guanosine(46) in tRNA + S-adenosyl-L-methionine = N(7)-methylguanosine(46) in tRNA + S-adenosyl-L-homocysteine. The protein operates within tRNA modification; N(7)-methylguanine-tRNA biosynthesis. Its function is as follows. Catalyzes the formation of N(7)-methylguanine at position 46 (m7G46) in tRNA. This is tRNA (guanine-N(7)-)-methyltransferase from Bradyrhizobium diazoefficiens (strain JCM 10833 / BCRC 13528 / IAM 13628 / NBRC 14792 / USDA 110).